The sequence spans 403 residues: Argininosuccinate synthase (403 aa).

ATP is bound at residue A8 to S16. L-citrulline is bound at residue Y87. G117 is a binding site for ATP. Residues T119, N123, and D124 each contribute to the L-aspartate site. N123 contributes to the L-citrulline binding site. L-citrulline contacts are provided by R127, S175, E259, and Y271.

The protein belongs to the argininosuccinate synthase family. Type 1 subfamily. As to quaternary structure, homotetramer.

It localises to the cytoplasm. It catalyses the reaction L-citrulline + L-aspartate + ATP = 2-(N(omega)-L-arginino)succinate + AMP + diphosphate + H(+). It functions in the pathway amino-acid biosynthesis; L-arginine biosynthesis; L-arginine from L-ornithine and carbamoyl phosphate: step 2/3. The protein is Argininosuccinate synthase of Salinispora arenicola (strain CNS-205).